Consider the following 377-residue polypeptide: MNNDVVELAKDLISRPSVTPLDEGCQTLMANRLAAVGFNIEPMVFEDTTNMWARRGNCDPVFCFAGHTDVVPTGDLNRWHTPPFEPTIIDNYLHGRGAADMKGSLAAMIIATERFVAKHPDHNGSIAYLITSDEEGPFINGTTRVIDTLEARNEKMTWALVGEPSSTHKLGDVVKNGRRGSLTGNLTVNGIQGHVAYPHLADNPIHKAVPALTELAQMHWDNGNEFFPPTSFQIANINGGTGASNVIPGELTVMFNFRYSTEVTAEELILRVVSILDAHGLDYDINWIFNGLPFLTGDGPLLDATREAIREVTGYETDPQTSGGTSDGRFIAPTGAQVLELGPVNATIHKVNECVNVADLEILANCYERILEKLLCK.

His-67 contributes to the Zn(2+) binding site. Asp-69 is an active-site residue. Asp-100 is a Zn(2+) binding site. Glu-134 functions as the Proton acceptor in the catalytic mechanism. Glu-135, Glu-163, and His-349 together coordinate Zn(2+).

The protein belongs to the peptidase M20A family. DapE subfamily. As to quaternary structure, homodimer. The cofactor is Zn(2+). Requires Co(2+) as cofactor.

The enzyme catalyses N-succinyl-(2S,6S)-2,6-diaminopimelate + H2O = (2S,6S)-2,6-diaminopimelate + succinate. It functions in the pathway amino-acid biosynthesis; L-lysine biosynthesis via DAP pathway; LL-2,6-diaminopimelate from (S)-tetrahydrodipicolinate (succinylase route): step 3/3. Catalyzes the hydrolysis of N-succinyl-L,L-diaminopimelic acid (SDAP), forming succinate and LL-2,6-diaminopimelate (DAP), an intermediate involved in the bacterial biosynthesis of lysine and meso-diaminopimelic acid, an essential component of bacterial cell walls. This Shewanella frigidimarina (strain NCIMB 400) protein is Succinyl-diaminopimelate desuccinylase.